The following is a 472-amino-acid chain: Phosphoenolpyruvate carboxylase (472 aa).

The protein belongs to the PEPCase type 2 family. As to quaternary structure, homotetramer. The cofactor is Mg(2+).

The catalysed reaction is oxaloacetate + phosphate = phosphoenolpyruvate + hydrogencarbonate. Catalyzes the irreversible beta-carboxylation of phosphoenolpyruvate (PEP) to form oxaloacetate (OAA), a four-carbon dicarboxylic acid source for the tricarboxylic acid cycle. In Pyrococcus furiosus (strain ATCC 43587 / DSM 3638 / JCM 8422 / Vc1), this protein is Phosphoenolpyruvate carboxylase.